A 319-amino-acid polypeptide reads, in one-letter code: Cobalamin biosynthesis protein CobD (319 aa).

4 consecutive transmembrane segments (helical) span residues 56–76, 153–173, 204–224, and 290–310; these read GLWI…LWLM, VDGV…LAMA, LANW…AWFI, and IPLS…LFAL.

This sequence belongs to the CobD/CbiB family.

The protein localises to the cell membrane. Its pathway is cofactor biosynthesis; adenosylcobalamin biosynthesis. Its function is as follows. Converts cobyric acid to cobinamide by the addition of aminopropanol on the F carboxylic group. In Photorhabdus laumondii subsp. laumondii (strain DSM 15139 / CIP 105565 / TT01) (Photorhabdus luminescens subsp. laumondii), this protein is Cobalamin biosynthesis protein CobD.